The following is a 76-amino-acid chain: Adropin (76 aa).

The N-terminal stretch at 1-33 is a signal peptide; it reads MGAAISQGALIAIVCNGLVGFLLLLLWVILCWA. The interval 41 to 76 is disordered; the sequence is VDSLSESSPNSSPGPCPEKAPPPQKPSHEGSYLLQP. Positions 52–65 are enriched in pro residues; the sequence is SPGPCPEKAPPPQK.

As to expression, expressed in liver and brain.

It is found in the secreted. Its function is as follows. Involved in the regulation of glucose homeostasis and lipid metabolism. In Homo sapiens (Human), this protein is Adropin (ENHO).